Reading from the N-terminus, the 138-residue chain is Putative pre-16S rRNA nuclease (138 aa).

Belongs to the YqgF nuclease family.

The protein resides in the cytoplasm. Functionally, could be a nuclease involved in processing of the 5'-end of pre-16S rRNA. The polypeptide is Putative pre-16S rRNA nuclease (Klebsiella pneumoniae subsp. pneumoniae (strain ATCC 700721 / MGH 78578)).